Reading from the N-terminus, the 252-residue chain is Imidazole glycerol phosphate synthase subunit HisF (252 aa).

Residues D11 and D130 contribute to the active site.

This sequence belongs to the HisA/HisF family. As to quaternary structure, heterodimer of HisH and HisF.

It localises to the cytoplasm. The enzyme catalyses 5-[(5-phospho-1-deoxy-D-ribulos-1-ylimino)methylamino]-1-(5-phospho-beta-D-ribosyl)imidazole-4-carboxamide + L-glutamine = D-erythro-1-(imidazol-4-yl)glycerol 3-phosphate + 5-amino-1-(5-phospho-beta-D-ribosyl)imidazole-4-carboxamide + L-glutamate + H(+). It functions in the pathway amino-acid biosynthesis; L-histidine biosynthesis; L-histidine from 5-phospho-alpha-D-ribose 1-diphosphate: step 5/9. In terms of biological role, IGPS catalyzes the conversion of PRFAR and glutamine to IGP, AICAR and glutamate. The HisF subunit catalyzes the cyclization activity that produces IGP and AICAR from PRFAR using the ammonia provided by the HisH subunit. This chain is Imidazole glycerol phosphate synthase subunit HisF, found in Persephonella marina (strain DSM 14350 / EX-H1).